A 236-amino-acid polypeptide reads, in one-letter code: Cytochrome b-c1 complex subunit Rieske-4, mitochondrial (236 aa).

The N-terminal 24 residues, 1 to 24 (MINFGSCWGLASVTSNSFSIISGF), are a transit peptide targeting the mitochondrion. The Mitochondrial matrix segment spans residues 25–73 (SSNSVSHAHDMGLVPDLPPTVAAIKNPTSKIVYDEHNHERYPPGDPSKR). The helical transmembrane segment at 74–96 (AFAYFVLTGGRFVYASLVRLLIL) threads the bilayer. At 97-236 (KFVLSMSASK…FLEENKLLIG (140 aa)) the chain is on the mitochondrial intermembrane side. The Rieske domain maps to 146–234 (INLANSVDLG…YSFLEENKLL (89 aa)). The [2Fe-2S] cluster site is built by Cys-179, His-181, Cys-198, and His-201. Cys-184 and Cys-200 are oxidised to a cystine.

Belongs to the Rieske iron-sulfur protein family. Component of the ubiquinol-cytochrome c oxidoreductase (cytochrome b-c1 complex, complex III, CIII), a multisubunit enzyme composed of 3 respiratory subunits cytochrome b, cytochrome c1 and Rieske protein, 2 core protein subunits, and several low-molecular weight protein subunits. The complex exists as an obligatory dimer and forms supercomplexes (SCs) in the inner mitochondrial membrane with cytochrome c oxidase (complex IV, CIV). The cofactor is [2Fe-2S] cluster.

Its subcellular location is the mitochondrion inner membrane. It carries out the reaction a quinol + 2 Fe(III)-[cytochrome c](out) = a quinone + 2 Fe(II)-[cytochrome c](out) + 2 H(+)(out). Component of the ubiquinol-cytochrome c oxidoreductase, a multisubunit transmembrane complex that is part of the mitochondrial electron transport chain which drives oxidative phosphorylation. The respiratory chain contains 3 multisubunit complexes succinate dehydrogenase (complex II, CII), ubiquinol-cytochrome c oxidoreductase (cytochrome b-c1 complex, complex III, CIII) and cytochrome c oxidase (complex IV, CIV), that cooperate to transfer electrons derived from NADH and succinate to molecular oxygen, creating an electrochemical gradient over the inner membrane that drives transmembrane transport and the ATP synthase. The cytochrome b-c1 complex catalyzes electron transfer from ubiquinol to cytochrome c, linking this redox reaction to translocation of protons across the mitochondrial inner membrane, with protons being carried across the membrane as hydrogens on the quinol. In the process called Q cycle, 2 protons are consumed from the matrix, 4 protons are released into the intermembrane space and 2 electrons are passed to cytochrome c. The Rieske protein is a catalytic core subunit containing a [2Fe-2S] iron-sulfur cluster. It cycles between 2 conformational states during catalysis to transfer electrons from the quinol bound in the Q(0) site in cytochrome b to cytochrome c1. The polypeptide is Cytochrome b-c1 complex subunit Rieske-4, mitochondrial (Nicotiana tabacum (Common tobacco)).